A 391-amino-acid chain; its full sequence is Chaperone protein DnaJ (391 aa).

A J domain is found at 2 to 67 (DYYDVLGVSK…QKRESYDRYG (66 aa)). A CR-type zinc finger spans residues 148–226 (GVEKELLVSG…CRGQGRVKDK (79 aa)). Zn(2+)-binding residues include Cys161, Cys164, Cys178, Cys181, Cys200, Cys203, Cys214, and Cys217. 4 CXXCXGXG motif repeats span residues 161-168 (CTTCSGSG), 178-185 (CERCKGSG), 200-207 (CPECGGEG), and 214-221 (CSNCRGQG).

It belongs to the DnaJ family. In terms of assembly, homodimer. Zn(2+) serves as cofactor.

The protein localises to the cytoplasm. Functionally, participates actively in the response to hyperosmotic and heat shock by preventing the aggregation of stress-denatured proteins and by disaggregating proteins, also in an autonomous, DnaK-independent fashion. Unfolded proteins bind initially to DnaJ; upon interaction with the DnaJ-bound protein, DnaK hydrolyzes its bound ATP, resulting in the formation of a stable complex. GrpE releases ADP from DnaK; ATP binding to DnaK triggers the release of the substrate protein, thus completing the reaction cycle. Several rounds of ATP-dependent interactions between DnaJ, DnaK and GrpE are required for fully efficient folding. Also involved, together with DnaK and GrpE, in the DNA replication of plasmids through activation of initiation proteins. The chain is Chaperone protein DnaJ from Chlamydia felis (strain Fe/C-56) (Chlamydophila felis).